The primary structure comprises 253 residues: 5'/3'-nucleotidase SurE (253 aa).

Positions 8, 9, 39, and 92 each coordinate a divalent metal cation.

It belongs to the SurE nucleotidase family. A divalent metal cation is required as a cofactor.

The protein resides in the cytoplasm. It catalyses the reaction a ribonucleoside 5'-phosphate + H2O = a ribonucleoside + phosphate. The catalysed reaction is a ribonucleoside 3'-phosphate + H2O = a ribonucleoside + phosphate. The enzyme catalyses [phosphate](n) + H2O = [phosphate](n-1) + phosphate + H(+). Functionally, nucleotidase with a broad substrate specificity as it can dephosphorylate various ribo- and deoxyribonucleoside 5'-monophosphates and ribonucleoside 3'-monophosphates with highest affinity to 3'-AMP. Also hydrolyzes polyphosphate (exopolyphosphatase activity) with the preference for short-chain-length substrates (P20-25). Might be involved in the regulation of dNTP and NTP pools, and in the turnover of 3'-mononucleotides produced by numerous intracellular RNases (T1, T2, and F) during the degradation of various RNAs. In Shigella dysenteriae serotype 1 (strain Sd197), this protein is 5'/3'-nucleotidase SurE.